Here is a 979-residue protein sequence, read N- to C-terminus: Protein argonaute PNH1 (979 aa).

The interval 1–95 (MLEVLDMAPP…GGRAGAGPGP (95 aa)) is disordered. Low complexity predominate over residues 54-67 (AETAAATAAVAPPE). Over residues 77 to 86 (GRRRGGRGRG) the composition is skewed to basic residues. Positions 333–446 (PVIEFVAQIL…LPMEACKIVE (114 aa)) constitute a PAZ domain. The 322-residue stretch at 620-941 (LLLAILPDNN…AAFRARFYME (322 aa)) folds into the Piwi domain.

This sequence belongs to the argonaute family. Ago subfamily.

The protein localises to the cytoplasm. Probably involved in the RNA silencing pathway. May bind to short RNAs such as microRNAs (miRNAs) or short interfering RNAs (siRNAs), and represses the translation of mRNAs which are complementary to them. Plays a role in the maintenance of the indeterminate state of the stem cells in the shoot apical meristem (SAM). Regulates leaf formation through vascular development and may be involved in determining the central domain of the leaf founder region. In Oryza sativa subsp. japonica (Rice), this protein is Protein argonaute PNH1 (PHN1).